The following is a 346-amino-acid chain: Partitioning defective 6 homolog alpha (346 aa).

An interaction with PRKCI and PRKCZ region spans residues 1–116 (MARPQRTPAR…SNSLQRRKKG (116 aa)). The 81-residue stretch at 15 to 95 (IVEVKSKFDA…PPLRLLVQKR (81 aa)) folds into the PB1 domain. The interval 126-253 (RTRPPLLISL…VTVKPANQRN (128 aa)) is interaction with PARD3 and CDC42. A Pseudo-CRIB domain is found at 133 to 150 (ISLPQDFRQVSSVIDVDL). The PDZ domain occupies 157–250 (RVRLHKHGSD…NLIVTVKPAN (94 aa)). 2 disordered regions span residues 257 to 294 (RGAS…HPPC) and 317 to 346 (GSSL…GFSL). Ser-278 is subject to Phosphoserine. A compositionally biased stretch (polar residues) spans 317 to 332 (GSSLPSLDSREQANSG). A Phosphoserine modification is found at Ser-345.

Belongs to the PAR6 family. Interacts with PALS1 and CRB3. Interacts with PARD3. Interacts with GTP-bound forms of CDC42, RHOQ/TC10 and RAC1. Interacts with the N-terminal part of PRKCI and PRKCZ. Part of a complex with PARD3, CDC42 or RAC1 and PRKCI or PRKCZ. Part of a complex with LLGL1 and PRKCI. Interacts with MAP2K5. Interacts with TGFBR1; involved in TGF-beta induced epithelial to mesenchymal transition. Interacts with ECT2 ('Thr-359' phosphorylated form) and PRKCI. Interacts with DCTN1 and PCM1. Post-translationally, phosphorylated by the TGF-beta receptor. In terms of processing, ubiquitinated by the SCF(FBXO31) complex, leading to its proteasomal degradation.

It localises to the cytoplasm. It is found in the cell membrane. Its subcellular location is the cell junction. The protein resides in the tight junction. The protein localises to the cytoskeleton. It localises to the microtubule organizing center. It is found in the centrosome. Its subcellular location is the centriolar satellite. Adapter protein involved in asymmetrical cell division and cell polarization processes. Probably involved in the formation of epithelial tight junctions. Association with PARD3 may prevent the interaction of PARD3 with F11R/JAM1, thereby preventing tight junction assembly. The PARD6-PARD3 complex links GTP-bound Rho small GTPases to atypical protein kinase C proteins. Regulates centrosome organization and function. Essential for the centrosomal recruitment of key proteins that control centrosomal microtubule organization. The chain is Partitioning defective 6 homolog alpha (Pard6a) from Rattus norvegicus (Rat).